The following is a 116-amino-acid chain: Large ribosomal subunit protein bL19 (116 aa).

Belongs to the bacterial ribosomal protein bL19 family.

Its function is as follows. This protein is located at the 30S-50S ribosomal subunit interface and may play a role in the structure and function of the aminoacyl-tRNA binding site. The chain is Large ribosomal subunit protein bL19 from Staphylococcus saprophyticus subsp. saprophyticus (strain ATCC 15305 / DSM 20229 / NCIMB 8711 / NCTC 7292 / S-41).